The chain runs to 771 residues: Glucocorticoid receptor (771 aa).

The tract at residues 1–415 (MDLKESVTSS…STTTGPPPKL (415 aa)) is modulating. Thr8 is modified (phosphothreonine). Omega-N-methylarginine is present on Arg22. A phosphoserine mark is found at Ser44, Ser133, Ser199, Ser207, and Ser222. Over residues 129–172 (SRSTSVPENPKNSASAVSGTPTEEFPKTQSDLSSEQENLKSQAG) the composition is skewed to polar residues. The disordered stretch occupies residues 129–184 (SRSTSVPENPKNSASAVSGTPTEEFPKTQSDLSSEQENLKSQAGTNGGNVKFPPDQ). Lys254 is covalently cross-linked (Glycyl lysine isopeptide (Lys-Gly) (interchain with G-Cter in SUMO2)). Ser263 carries the post-translational modification Phosphoserine. Residues Lys273 and Lys289 each participate in a glycyl lysine isopeptide (Lys-Gly) (interchain with G-Cter in SUMO); alternate cross-link. Residues Lys273 and Lys289 each participate in a glycyl lysine isopeptide (Lys-Gly) (interchain with G-Cter in SUMO2); alternate cross-link. Phosphoserine is present on residues Ser303 and Ser400. A disordered region spans residues 390–411 (SSPGLRPDVSSPPSSSSTTTGP). A compositionally biased stretch (low complexity) spans 400 to 409 (SPPSSSSTTT). Lys414 is covalently cross-linked (Glycyl lysine isopeptide (Lys-Gly) (interchain with G-Cter in ubiquitin)). 2 NR C4-type zinc fingers span residues 416–436 (CLVCSDELSGCHYGVLTCGSC) and 452–476 (CAGRNDCIIDKIRRENCPACRYRKC). Positions 416–481 (CLVCSDELSG…RYRKCLQAGM (66 aa)) form a DNA-binding region, nuclear receptor. N6-acetyllysine occurs at positions 475, 487, 489, and 490. The segment at 480-771 (GMNLQARKTK…DIKKLLFHQK (292 aa)) is interaction with CLOCK. A hinge region spans residues 482 to 517 (NLQARKTKKKIKGIQQATTGVSQNTSENPNKTIVPA). Residues 518-752 (TLPQLTPTLV…FPEMLAEIIT (235 aa)) enclose the NR LBD domain. The segment at 526-691 (LVSLLEVIEP…EIRMTYIKEL (166 aa)) is interaction with CRY1. Lys697 participates in a covalent cross-link: Glycyl lysine isopeptide (Lys-Gly) (interchain with G-Cter in SUMO).

It belongs to the nuclear hormone receptor family. NR3 subfamily. As to quaternary structure, heteromultimeric cytoplasmic complex with HSP90AA1, HSPA1A/HSPA1B, and FKBP5 or another immunophilin such as PPID, STIP1, or the immunophilin homolog PPP5C. Upon ligand binding FKBP5 dissociates from the complex and FKBP4 takes its place, thereby linking the complex to dynein and mediating transport to the nucleus, where the complex dissociates. Probably forms a complex composed of chaperones HSP90 and HSP70, co-chaperones CDC37, PPP5C, TSC1 and client protein TSC2, CDK4, AKT, RAF1 and NR3C1; this complex does not contain co-chaperones STIP1/HOP and PTGES3/p23. Directly interacts with UNC45A. Binds to DNA as a homodimer, and as heterodimer with NR3C2 or the retinoid X receptor. Binds STAT5A and STAT5B homodimers and heterodimers. Interacts with NRIP1, POU2F1, POU2F2 and TRIM28. Interacts with several coactivator complexes, including the SMARCA4 complex, CREBBP/EP300, TADA2L (Ada complex) and p160 coactivators such as NCOA2 and NCOA6. Interaction with BAG1 inhibits transactivation. Interacts with HEXIM1 and TGFB1I1. Interacts with NCOA1. Interacts with NCOA3, SMARCA4, SMARCC1, SMARCD1, and SMARCE1. Interacts with CLOCK, CRY1 and CRY2 in a ligand-dependent fashion. Interacts with CIART. Interacts with RWDD3. Interacts with UBE2I/UBC9 and this interaction is enhanced in the presence of RWDD3. Interacts with GRIP1. Interacts with NR4A3 (via nuclear receptor DNA-binding domain), represses transcription activity of NR4A3 on the POMC promoter Nur response element (NurRE). Directly interacts with PNRC2 to attract and form a complex with UPF1 and DCP1A; the interaction leads to rapid mRNA degradation. Interacts with GSK3B. Interacts with FNIP1 and FNIP2. Interacts (via C-terminus) with HNRNPU (via C-terminus). Interacts with MCM3AP. Interacts (via domain NR LBD) with HSP90AA1 and HSP90AB1. In the absence of hormonal ligand, interacts with TACC1. Interacts (via NR LBD domain) with ZNF764 (via KRAB domain); the interaction regulates transcription factor activity of NR3C1 by directing its actions toward certain biologic pathways. Acetylation by CLOCK reduces its binding to glucocorticoid response elements and its transcriptional activity. In terms of processing, increased proteasome-mediated degradation in response to glucocorticoids. Post-translationally, phosphorylated in the absence of hormone; becomes hyperphosphorylated in the presence of glucocorticoid. The Ser-199, Ser-222 and Ser-400-phosphorylated forms are mainly cytoplasmic, and the Ser-207-phosphorylated form is nuclear. Phosphorylation at Ser-207 increases transcriptional activity. Phosphorylation at Ser-199, Ser-222 and Ser-400 decreases signaling capacity. Phosphorylation at Ser-400 may protect from glucocorticoid-induced apoptosis. Phosphorylation at Ser-199 and Ser-207 is not required in regulation of chromosome segregation. May be dephosphorylated by PPP5C, attenuates NR3C1 action. Ubiquitinated by UBR5, leading to its degradation: UBR5 specifically recognizes and binds ligand-bound NR3C1 when it is not associated with coactivators (NCOAs). In presence of NCOAs, the UBR5-degron is not accessible, preventing its ubiquitination and degradation. In terms of processing, sumoylation at Lys-273 and Lys-289 negatively regulates its transcriptional activity. Sumoylation at Lys-697 positively regulates its transcriptional activity in the presence of RWDD3. Sumoylation at Lys-273 and Lys-289 is dispensable whereas sumoylation at Lys-697 is critical for the stimulatory effect of RWDD3 on its transcriptional activity. Heat shock increases sumoylation in a RWDD3-dependent manner.

The protein resides in the cytoplasm. It is found in the nucleus. It localises to the mitochondrion. Its subcellular location is the cytoskeleton. The protein localises to the spindle. The protein resides in the microtubule organizing center. It is found in the centrosome. It localises to the chromosome. Its subcellular location is the nucleoplasm. Receptor for glucocorticoids (GC). Has a dual mode of action: as a transcription factor that binds to glucocorticoid response elements (GRE), both for nuclear and mitochondrial DNA, and as a modulator of other transcription factors. Affects inflammatory responses, cellular proliferation and differentiation in target tissues. Involved in chromatin remodeling. Plays a role in rapid mRNA degradation by binding to the 5' UTR of target mRNAs and interacting with PNRC2 in a ligand-dependent manner which recruits the RNA helicase UPF1 and the mRNA-decapping enzyme DCP1A, leading to RNA decay. Could act as a coactivator for STAT5-dependent transcription upon growth hormone (GH) stimulation and could reveal an essential role of hepatic GR in the control of body growth. Mediates glucocorticoid-induced apoptosis. Promotes accurate chromosome segregation during mitosis. May act as a tumor suppressor. May play a negative role in adipogenesis through the regulation of lipolytic and antilipogenic gene expression. This is Glucocorticoid receptor (NR3C1) from Cavia porcellus (Guinea pig).